A 473-amino-acid chain; its full sequence is ATP synthase subunit beta (473 aa).

G153–T160 provides a ligand contact to ATP.

Belongs to the ATPase alpha/beta chains family. As to quaternary structure, F-type ATPases have 2 components, CF(1) - the catalytic core - and CF(0) - the membrane proton channel. CF(1) has five subunits: alpha(3), beta(3), gamma(1), delta(1), epsilon(1). CF(0) has three main subunits: a(1), b(2) and c(9-12). The alpha and beta chains form an alternating ring which encloses part of the gamma chain. CF(1) is attached to CF(0) by a central stalk formed by the gamma and epsilon chains, while a peripheral stalk is formed by the delta and b chains.

It localises to the cell inner membrane. It catalyses the reaction ATP + H2O + 4 H(+)(in) = ADP + phosphate + 5 H(+)(out). Its function is as follows. Produces ATP from ADP in the presence of a proton gradient across the membrane. The catalytic sites are hosted primarily by the beta subunits. The polypeptide is ATP synthase subunit beta (Rickettsia canadensis (strain McKiel)).